The primary structure comprises 340 residues: Galactoside alpha-(1,2)-fucosyltransferase 2 (340 aa).

The Cytoplasmic segment spans residues 1 to 7 (MLSMQAS). A helical; Signal-anchor for type II membrane protein transmembrane segment spans residues 8–28 (FFFPTGPFILFVFTASTIFHL). Residues 29-340 (QQRMVKIQPT…EADLSPLLKH (312 aa)) are Lumenal-facing. N-linked (GlcNAc...) asparagine glycosylation is found at Asn185, Asn251, Asn279, and Asn305.

It localises to the golgi apparatus. Its subcellular location is the golgi stack membrane. It carries out the reaction a beta-D-galactosyl-(1-&gt;3)-N-acetyl-beta-D-glucosaminyl derivative + GDP-beta-L-fucose = an alpha-L-Fuc-(1-&gt;2)-beta-D-Gal-(1-&gt;3)-beta-D-GlcNAc derivative + GDP + H(+). It catalyses the reaction a beta-D-galactosyl-(1-&gt;4)-N-acetyl-beta-D-glucosaminyl derivative + GDP-beta-L-fucose = an alpha-L-Fuc-(1-&gt;2)-beta-D-Gal-(1-&gt;4)-beta-D-GlcNAc derivative + GDP + H(+). The catalysed reaction is a neolactoside nLc4Cer + GDP-beta-L-fucose = a neolactoside IV(2)-alpha-Fuc-nLc4Cer + GDP + H(+). The enzyme catalyses a neolactoside nLc4Cer(d18:1(4E)) + GDP-beta-L-fucose = a neolactoside IV(2)-alpha-Fuc-nLc4Cer(d18:1(4E)) + GDP + H(+). It carries out the reaction a ganglioside GM1 + GDP-beta-L-fucose = a ganglioside Fuc-GM1 + GDP + H(+). It catalyses the reaction a ganglioside GA1 + GDP-beta-L-fucose = a ganglioside Fuc-GA1 + GDP + H(+). The catalysed reaction is Lc4Cer + GDP-beta-L-fucose = alpha-L-fucosyl-(1-&gt;2)-beta-D-galactosyl-(1-&gt;3)-N-acetyl-beta-D-glucosaminyl-(1-&gt;3)-beta-D-galactosyl-(1-&gt;4)-beta-D-glucosyl-(1&lt;-&gt;1')-ceramide + GDP + H(+). The enzyme catalyses a beta-D-Gal-(1-&gt;3)-beta-D-GlcNAc-(1-&gt;3)-beta-D-Gal-(1-&gt;4)-beta-D-Glc-(1&lt;-&gt;1')-Cer(d18:1(4E)) + GDP-beta-L-fucose = alpha-L-fucosyl-(1-&gt;2)- beta-D-galactosyl-(1-&gt;3)-N-acetyl-beta-D-glucosaminyl-(1-&gt;3)-beta-D-galactosyl-(1-&gt;4)-beta-D-glucosyl-(1&lt;-&gt;1')-N-acylsphing-4-enine + GDP + H(+). It carries out the reaction a ganglioside GD1b + GDP-beta-L-fucose = a ganglioside Fuc-GD1b + GDP + H(+). It catalyses the reaction a ganglioside GM1 (d18:1(4E)) + GDP-beta-L-fucose = a ganglioside Fuc-GM1 (d18:1(4E)) + GDP + H(+). The catalysed reaction is a globoside GalGb4Cer (d18:1(4E)) + GDP-beta-L-fucose = a globoside Globo-H (d18:1(4E)) + GDP + H(+). The enzyme catalyses a lactoside III(4)-a-Fuc-Lc4Cer + GDP-beta-L-fucose = a lactoside IV(2),III(4)-a-[Fuc]2-Lc4Cer + GDP + H(+). It carries out the reaction beta-D-galactosyl-(1-&gt;3)-N-acetyl-D-galactosamine + GDP-beta-L-fucose = alpha-L-fucosyl-(1-&gt;2)-beta-D-galactosyl-(1-&gt;3)-N-acetyl-D-galactosamine + GDP + H(+). It participates in protein modification; protein glycosylation. Functionally, catalyzes the transfer of L-fucose, from a guanosine diphosphate-beta-L-fucose, to the terminal galactose on both O- and N-linked glycans chains of cell surface glycoproteins and glycolipids and the resulting epitope regulates several processes such as cell-cell interaction including host-microbe interaction, cell surface expression and cell proliferation. Preferentially fucosylates gangliosides GA1 and GM1 in the antrum, cecum and colon and in the female reproductive organs. Fucosylated host glycoproteins or glycolipids mediate interaction with intestinal microbiota influencing its composition. Creates a soluble precursor oligosaccharide FuC-alpha ((1,2)Galbeta-) called the H antigen which is an essential substrate for the final step in the soluble ABO blood group antigen synthesis pathway. The polypeptide is Galactoside alpha-(1,2)-fucosyltransferase 2 (Sus scrofa (Pig)).